The following is a 565-amino-acid chain: Phospholipase B-like protein C (565 aa).

The signal sequence occupies residues 1-21 (MNKIIILISLFLNFLFGYVVC). N-linked (GlcNAc...) asparagine glycosylation is found at Asn53, Asn84, Asn118, Asn200, Asn201, Asn211, Asn266, Asn302, Asn406, and Asn485.

The protein belongs to the phospholipase B-like family.

It is found in the secreted. Its function is as follows. Probable phospholipase. The protein is Phospholipase B-like protein C (plbC) of Dictyostelium discoideum (Social amoeba).